A 543-amino-acid chain; its full sequence is Lysosomal cobalamin transport escort protein LMBD1 (543 aa).

The Extracellular segment spans residues 1–12; that stretch reads MAAAAAGAASAE. Residues 13–33 traverse the membrane as a helical segment; sequence LVIGWCIFGLLLLAILAFCWI. Residues 34–52 lie on the Cytoplasmic side of the membrane; the sequence is YVRKYQSQRESEVVSTITA. The chain crosses the membrane as a helical span at residues 53-73; it reads IFSLAIALITSALLPVDIFLV. At 74 to 102 the chain is on the extracellular side; sequence SYMKNQNGTFKDWANGNVSRQIEDTVLYG. N-linked (GlcNAc...) asparagine glycans are attached at residues Asn-80 and Asn-90. The chain crosses the membrane as a helical span at residues 103–123; it reads YYTLYSVILFCVFFWIPFVYF. The Cytoplasmic portion of the chain corresponds to 124-146; that stretch reads YYEEKDDDDTGKCTQVKMALKYT. The chain crosses the membrane as a helical span at residues 147–167; it reads LGFVVICALLLLVGAFVPLNL. Topologically, residues 168–190 are extracellular; that stretch reads PDNKNSTEWEKVKFLFEELGSSH. The N-linked (GlcNAc...) asparagine glycan is linked to Asn-172. A helical transmembrane segment spans residues 191–211; that stretch reads GLAALSFSISSLTLVGMLAAI. Residues 212–307 lie on the Cytoplasmic side of the membrane; the sequence is IYTAYGMSAL…KFCGALRPLK (96 aa). The short motif at 234–237 is the YERL motif; mediates interaction with adapter protein complex 2 and is essential for its function in clathrin-mediated endocytosis of INSR element; sequence YERL. The residue at position 240 (Thr-240) is a Phosphothreonine. Residues 296–299 carry the WTKF motif; mediates interaction with adapter protein complex 2 and is essential for its function in clathrin-mediated endocytosis of INSR motif; sequence WTKF. A helical transmembrane segment spans residues 308-328; sequence IIWGIFFIFVALLFVISLFLS. The Extracellular segment spans residues 329 to 366; sequence NLDKALHSAGIDSGFIIFGANLSNPLNMLLPLLQTVFP. N-linked (GlcNAc...) asparagine glycosylation is present at Asn-349. A helical transmembrane segment spans residues 367–387; that stretch reads LDYILITIIIMYFIFTSMAGI. Over 388 to 410 the chain is Cytoplasmic; sequence RNIGIWFFWIRLYKIRRGRTRPQ. A helical transmembrane segment spans residues 411-431; that stretch reads ALLFLCMILLLIVLHTSYMIY. Residues 432–488 are Extracellular-facing; the sequence is SLAPQYVMYGSQNYLIESNMTYNDHRGNSSLSVPKRCDADAPEDQCTVTRTYLFLHK. N-linked (GlcNAc...) asparagine glycosylation is found at Asn-450 and Asn-459. A helical transmembrane segment spans residues 489–509; that stretch reads FWFFSAAYYFGNWAFLGVFIV. Residues 510–543 lie on the Cytoplasmic side of the membrane; the sequence is GFIVSCCKGKKSVLERVDEDDSDLSDDEPSLYSV. Phosphoserine occurs at positions 531 and 534.

The protein belongs to the LIMR family. LMBRD1 subfamily. As to quaternary structure, interacts with ABCD4; this interaction induces the translocation of ABCD4 from the endoplasmic reticulum to the lysosome. Interacts with ABCD4 and MMACHC; this interaction ensures the transport of cobalamin from the lysosome to the cytoplasm. Interacts with INSR, adapter protein complex 2 and clathrin heavy chain. In terms of processing, N-glycosylated.

It is found in the endoplasmic reticulum membrane. The protein localises to the lysosome membrane. The protein resides in the cell membrane. It localises to the cytoplasmic vesicle. Its subcellular location is the clathrin-coated vesicle. Its function is as follows. Lysosomal membrane chaperone required to export cobalamin (vitamin B12) from the lysosome to the cytosol, allowing its conversion to cofactors. Targets ABCD4 transporter from the endoplasmic reticulum to the lysosome. Then forms a complex with lysosomal ABCD4 and cytoplasmic MMACHC to transport cobalamin across the lysosomal membrane. Acts as an adapter protein which plays an important role in mediating and regulating the internalization of the insulin receptor (INSR). Involved in clathrin-mediated endocytosis of INSR via its interaction with adapter protein complex 2. Essential for the initiation of gastrulation and early formation of mesoderm structures during embryogenesis. The protein is Lysosomal cobalamin transport escort protein LMBD1 (LMBRD1) of Bos taurus (Bovine).